The sequence spans 307 residues: tRNA pseudouridine synthase B (307 aa).

The active-site Nucleophile is the Asp-47.

The protein belongs to the pseudouridine synthase TruB family. Type 1 subfamily.

The catalysed reaction is uridine(55) in tRNA = pseudouridine(55) in tRNA. Functionally, responsible for synthesis of pseudouridine from uracil-55 in the psi GC loop of transfer RNAs. This chain is tRNA pseudouridine synthase B, found in Chromohalobacter salexigens (strain ATCC BAA-138 / DSM 3043 / CIP 106854 / NCIMB 13768 / 1H11).